We begin with the raw amino-acid sequence, 260 residues long: tRNA pseudouridine synthase A (260 aa).

The active-site Nucleophile is the Asp-52. Tyr-110 contributes to the substrate binding site.

It belongs to the tRNA pseudouridine synthase TruA family. Homodimer.

It catalyses the reaction uridine(38/39/40) in tRNA = pseudouridine(38/39/40) in tRNA. Its function is as follows. Formation of pseudouridine at positions 38, 39 and 40 in the anticodon stem and loop of transfer RNAs. The sequence is that of tRNA pseudouridine synthase A from Spiroplasma kunkelii.